We begin with the raw amino-acid sequence, 237 residues long: Nodulation protein NolA (237 aa).

The 70-residue stretch at 10–79 (RWRIGELAGA…LQEIRRAMDG (70 aa)) folds into the HTH merR-type domain. The H-T-H motif DNA-binding region spans 13-32 (IGELAGATGVTVRTLHHYEH).

Involved in genotype-specific nodulation of soybeans. The sequence is that of Nodulation protein NolA (nolA) from Bradyrhizobium sp. (strain NC92).